The chain runs to 1268 residues: uncharacterized protein (1268 aa).

The segment covering 191-206 (KIVSVKPSKSSQQVDV) has biased composition (low complexity). Disordered stretches follow at residues 191–235 (KIVS…SKKK) and 253–273 (NCRSNPKTGNQGGNKGKSKGC). A compositionally biased stretch (basic and acidic residues) spans 223–235 (RKPEKSSQDSKKK). The segment at 239 to 256 (PTCFYCNKKGHYATNCRS) adopts a CCHC-type zinc-finger fold. Residues 465 to 644 (EMGVIVPITY…KQVTFLGFVD (180 aa)) form the Reverse transcriptase domain. The region spanning 844-997 (VPEAPWKRIH…TPAECHFGRK (154 aa)) is the Integrase catalytic domain. Residues 1092–1268 (GDYSRSSVNP…RRERVRTTWR (177 aa)) form a disordered region. Polar residues-rich tracts occupy residues 1127–1143 (VTSNGSSTDVNRGSRIT) and 1160–1169 (GSCSPTNNDV). The span at 1208–1221 (PSTSTGTPRGSTST) shows a compositional bias: low complexity. Residues 1222–1249 (QLGQASTRNGSRYTASGRNPSCQGNRYS) are compositionally biased toward polar residues. Positions 1257-1268 (TARRERVRTTWR) are enriched in basic and acidic residues.

This is an uncharacterized protein from Caenorhabditis elegans.